The primary structure comprises 504 residues: Probable chlorophyll(ide) b reductase NYC1, chloroplastic (504 aa).

A chloroplast-targeting transit peptide spans 1-33 (MAAAAVVHLSVHGRLRRSPELHARPYHRPSLLR). Positions 41–63 (ADNGGEEASSSPPPPTTAEARRR) are disordered. Helical transmembrane passes span 114 to 134 (YVIT…LSGG) and 141 to 161 (LIWY…ANSV). Residue 175–199 (ITGSTRGLGKALAREFLLSGDRVVI) coordinates NAD(+). The Proton acceptor role is filled by Tyr-339. Residues 479 to 499 (WVSVFSLSVVCAFIILSSSGG) form a helical membrane-spanning segment.

The protein belongs to the short-chain dehydrogenases/reductases (SDR) family. As to quaternary structure, interacts with NOL to form a complex that acts as a chlorophyll b reductase. Expressed in leaves and stems. Also detected in non-photosynthetic tissues such as roots.

The protein localises to the plastid. The protein resides in the chloroplast thylakoid membrane. The catalysed reaction is 7(1)-hydroxychlorophyllide a + NAD(+) = chlorophyllide b + NADH + H(+). The enzyme catalyses 7(1)-hydroxychlorophyllide a + NADP(+) = chlorophyllide b + NADPH + H(+). Required for proper chloroplast degradation. Involved in chlorophyll b degradation. This chain is Probable chlorophyll(ide) b reductase NYC1, chloroplastic (NYC1), found in Oryza sativa subsp. japonica (Rice).